A 66-amino-acid chain; its full sequence is MIGGLGMPELIIILVIILIIFGAGKLPEIGSGIGKGIKNFKKATRDAELNEGDKDDKEKEQEKLDK.

The helical transmembrane segment at 1–21 (MIGGLGMPELIIILVIILIIF) threads the bilayer. The tract at residues 45–66 (RDAELNEGDKDDKEKEQEKLDK) is disordered.

The protein belongs to the TatA/E family. In terms of assembly, the Tat system comprises two distinct complexes: a TatABC complex, containing multiple copies of TatA, TatB and TatC subunits, and a separate TatA complex, containing only TatA subunits. Substrates initially bind to the TatABC complex, which probably triggers association of the separate TatA complex to form the active translocon.

Its subcellular location is the cell inner membrane. In terms of biological role, part of the twin-arginine translocation (Tat) system that transports large folded proteins containing a characteristic twin-arginine motif in their signal peptide across membranes. TatA could form the protein-conducting channel of the Tat system. The polypeptide is Sec-independent protein translocase protein TatA (Desulforapulum autotrophicum (strain ATCC 43914 / DSM 3382 / VKM B-1955 / HRM2) (Desulfobacterium autotrophicum)).